We begin with the raw amino-acid sequence, 372 residues long: sn-glycerol-3-phosphate import ATP-binding protein UgpC (372 aa).

One can recognise an ABC transporter domain in the interval L2–I233. G35 to S42 serves as a coordination point for ATP.

This sequence belongs to the ABC transporter superfamily. sn-glycerol-3-phosphate importer (TC 3.A.1.1.3) family. In terms of assembly, the complex is composed of two ATP-binding proteins (UgpC), two transmembrane proteins (UgpA and UgpE) and a solute-binding protein (UgpB).

It localises to the cell inner membrane. The catalysed reaction is sn-glycerol 3-phosphate(out) + ATP + H2O = sn-glycerol 3-phosphate(in) + ADP + phosphate + H(+). Functionally, part of the ABC transporter complex UgpBAEC involved in sn-glycerol-3-phosphate (G3P) import. Responsible for energy coupling to the transport system. This is sn-glycerol-3-phosphate import ATP-binding protein UgpC from Vibrio vulnificus (strain CMCP6).